Consider the following 89-residue polypeptide: Small ribosomal subunit protein uS17 (89 aa).

This sequence belongs to the universal ribosomal protein uS17 family. In terms of assembly, part of the 30S ribosomal subunit.

Functionally, one of the primary rRNA binding proteins, it binds specifically to the 5'-end of 16S ribosomal RNA. In Chlorobium phaeobacteroides (strain BS1), this protein is Small ribosomal subunit protein uS17.